A 404-amino-acid chain; its full sequence is Serine/threonine transporter SstT (404 aa).

The next 9 helical transmembrane spans lie at 17-37, 39-59, 75-95, 138-158, 179-199, 212-232, 287-307, 319-339, and 354-374; these read IGIG…VTAI, ILGQ…VFAL, MTLI…VAVI, ALAT…GLAL, IVVW…FSTV, LLIL…NPLL, IPLG…VLTL, FLTA…ASGV, and FGIS…VGVI.

The protein belongs to the dicarboxylate/amino acid:cation symporter (DAACS) (TC 2.A.23) family.

It is found in the cell membrane. The catalysed reaction is L-serine(in) + Na(+)(in) = L-serine(out) + Na(+)(out). It catalyses the reaction L-threonine(in) + Na(+)(in) = L-threonine(out) + Na(+)(out). Its function is as follows. Involved in the import of serine and threonine into the cell, with the concomitant import of sodium (symport system). The sequence is that of Serine/threonine transporter SstT from Streptococcus equi subsp. equi (strain 4047).